The following is a 524-amino-acid chain: Coronin-2A (524 aa).

WD repeat units follow at residues 80 to 120 (GHRG…LTRN), 130 to 170 (GHAR…SVIA), 178 to 217 (CHQD…VLQE), 220 to 263 (YKGH…VPLT), and 269 to 308 (GSSG…PHLT). Positions 403–436 (LLDSQTLPPERPLSNSMVQVSPQPLEPMKQPAED) are disordered. Positions 404–424 (LDSQTLPPERPLSNSMVQVSP) are enriched in polar residues. Positions 484 to 523 (QMFYRQQEEIRRLRELLIQREVQTKQLELEIKNLRMALGQ) form a coiled coil.

It belongs to the WD repeat coronin family. Binds actin. Component of the N-Cor repressor complex, at least composed of NCOR1, NCOR2, HDAC3, TBL1X, TBL1R, CORO2A and GPS2.

In Mus musculus (Mouse), this protein is Coronin-2A (Coro2a).